The primary structure comprises 414 residues: Lipoyl synthase, mitochondrial (414 aa).

The N-terminal 18 residues, Met1 to Ile18, are a transit peptide targeting the mitochondrion. Positions Gly51–Ser67 are enriched in polar residues. Residues Gly51 to Arg75 are disordered. [4Fe-4S] cluster contacts are provided by Cys150, Cys155, Cys161, Cys181, Cys185, Cys188, and Ser396. In terms of domain architecture, Radical SAM core spans Gly164–Leu385.

Belongs to the radical SAM superfamily. Lipoyl synthase family. It depends on [4Fe-4S] cluster as a cofactor.

It localises to the mitochondrion. It carries out the reaction [[Fe-S] cluster scaffold protein carrying a second [4Fe-4S](2+) cluster] + N(6)-octanoyl-L-lysyl-[protein] + 2 oxidized [2Fe-2S]-[ferredoxin] + 2 S-adenosyl-L-methionine + 4 H(+) = [[Fe-S] cluster scaffold protein] + N(6)-[(R)-dihydrolipoyl]-L-lysyl-[protein] + 4 Fe(3+) + 2 hydrogen sulfide + 2 5'-deoxyadenosine + 2 L-methionine + 2 reduced [2Fe-2S]-[ferredoxin]. Its pathway is protein modification; protein lipoylation via endogenous pathway; protein N(6)-(lipoyl)lysine from octanoyl-[acyl-carrier-protein]: step 2/2. In terms of biological role, catalyzes the radical-mediated insertion of two sulfur atoms into the C-6 and C-8 positions of the octanoyl moiety bound to the lipoyl domains of lipoate-dependent enzymes, thereby converting the octanoylated domains into lipoylated derivatives. The chain is Lipoyl synthase, mitochondrial from Saccharomyces cerevisiae (strain RM11-1a) (Baker's yeast).